A 263-amino-acid chain; its full sequence is Acetylglutamate kinase (263 aa).

Substrate is bound by residues 48-49, arginine 70, and asparagine 162; that span reads GG.

It belongs to the acetylglutamate kinase family. ArgB subfamily.

The protein resides in the cytoplasm. The enzyme catalyses N-acetyl-L-glutamate + ATP = N-acetyl-L-glutamyl 5-phosphate + ADP. It participates in amino-acid biosynthesis; L-arginine biosynthesis; N(2)-acetyl-L-ornithine from L-glutamate: step 2/4. Catalyzes the ATP-dependent phosphorylation of N-acetyl-L-glutamate. This Vibrio parahaemolyticus serotype O3:K6 (strain RIMD 2210633) protein is Acetylglutamate kinase.